Reading from the N-terminus, the 476-residue chain is UDP-N-acetylmuramate--L-alanine ligase (476 aa).

125–131 lines the ATP pocket; sequence GTHGKTT.

This sequence belongs to the MurCDEF family.

It localises to the cytoplasm. It catalyses the reaction UDP-N-acetyl-alpha-D-muramate + L-alanine + ATP = UDP-N-acetyl-alpha-D-muramoyl-L-alanine + ADP + phosphate + H(+). The protein operates within cell wall biogenesis; peptidoglycan biosynthesis. Cell wall formation. This is UDP-N-acetylmuramate--L-alanine ligase from Actinobacillus succinogenes (strain ATCC 55618 / DSM 22257 / CCUG 43843 / 130Z).